Reading from the N-terminus, the 376-residue chain is Carbamoyl phosphate synthase small chain (376 aa).

The segment at 1 to 187 (MRAFLALEDG…AADGAYAWPG (187 aa)) is CPSase. Ser-45, Gly-239, and Gly-241 together coordinate L-glutamine. One can recognise a Glutamine amidotransferase type-1 domain in the interval 191–376 (RLVVYDYGIK…RGMVREAVGR (186 aa)). Residue Cys-266 is the Nucleophile of the active site. Residues Leu-267, Gln-270, Asn-308, Gly-310, and Phe-311 each contribute to the L-glutamine site. Active-site residues include His-349 and Glu-351.

This sequence belongs to the CarA family. In terms of assembly, composed of two chains; the small (or glutamine) chain promotes the hydrolysis of glutamine to ammonia, which is used by the large (or ammonia) chain to synthesize carbamoyl phosphate. Tetramer of heterodimers (alpha,beta)4.

It catalyses the reaction hydrogencarbonate + L-glutamine + 2 ATP + H2O = carbamoyl phosphate + L-glutamate + 2 ADP + phosphate + 2 H(+). The enzyme catalyses L-glutamine + H2O = L-glutamate + NH4(+). It functions in the pathway amino-acid biosynthesis; L-arginine biosynthesis; carbamoyl phosphate from bicarbonate: step 1/1. The protein operates within pyrimidine metabolism; UMP biosynthesis via de novo pathway; (S)-dihydroorotate from bicarbonate: step 1/3. Functionally, small subunit of the glutamine-dependent carbamoyl phosphate synthetase (CPSase). CPSase catalyzes the formation of carbamoyl phosphate from the ammonia moiety of glutamine, carbonate, and phosphate donated by ATP, constituting the first step of 2 biosynthetic pathways, one leading to arginine and/or urea and the other to pyrimidine nucleotides. The small subunit (glutamine amidotransferase) binds and cleaves glutamine to supply the large subunit with the substrate ammonia. The chain is Carbamoyl phosphate synthase small chain from Nitratidesulfovibrio vulgaris (strain DSM 19637 / Miyazaki F) (Desulfovibrio vulgaris).